The sequence spans 240 residues: Heme oxygenase 1 (240 aa).

Heme b contacts are provided by R10, H17, Y125, K168, and R172.

Belongs to the heme oxygenase family.

The enzyme catalyses heme b + 3 reduced [NADPH--hemoprotein reductase] + 3 O2 = biliverdin IXalpha + CO + Fe(2+) + 3 oxidized [NADPH--hemoprotein reductase] + 3 H2O + H(+). Its function is as follows. Catalyzes the opening of the heme ring with the release of iron. Key enzyme in the synthesis of the chromophoric part of the photosynthetic antennae. This Synechocystis sp. (strain ATCC 27184 / PCC 6803 / Kazusa) protein is Heme oxygenase 1 (pbsA1).